We begin with the raw amino-acid sequence, 475 residues long: Ribulose bisphosphate carboxylase large chain (475 aa).

A propeptide spanning residues 1-2 (MS) is cleaved from the precursor. Pro-3 is subject to N-acetylproline. An N6,N6,N6-trimethyllysine modification is found at Lys-14. 2 residues coordinate substrate: Asn-123 and Thr-173. Lys-175 acts as the Proton acceptor in catalysis. Lys-177 is a substrate binding site. 3 residues coordinate Mg(2+): Lys-201, Asp-203, and Glu-204. Lys-201 bears the N6-carboxylysine mark. Residue His-294 is the Proton acceptor of the active site. Residues Arg-295, His-327, and Ser-379 each coordinate substrate.

It belongs to the RuBisCO large chain family. Type I subfamily. Heterohexadecamer of 8 large chains and 8 small chains; disulfide-linked. The disulfide link is formed within the large subunit homodimers. Requires Mg(2+) as cofactor. The disulfide bond which can form in the large chain dimeric partners within the hexadecamer appears to be associated with oxidative stress and protein turnover.

It localises to the plastid. It is found in the chloroplast. It carries out the reaction 2 (2R)-3-phosphoglycerate + 2 H(+) = D-ribulose 1,5-bisphosphate + CO2 + H2O. The enzyme catalyses D-ribulose 1,5-bisphosphate + O2 = 2-phosphoglycolate + (2R)-3-phosphoglycerate + 2 H(+). Functionally, ruBisCO catalyzes two reactions: the carboxylation of D-ribulose 1,5-bisphosphate, the primary event in carbon dioxide fixation, as well as the oxidative fragmentation of the pentose substrate in the photorespiration process. Both reactions occur simultaneously and in competition at the same active site. In Liquidambar styraciflua (Sweetgum tree), this protein is Ribulose bisphosphate carboxylase large chain.